Here is a 133-residue protein sequence, read N- to C-terminus: Cell division protein FtsL (133 aa).

Topologically, residues 1 to 45 (MAVEKVYQPYDEQVYNSIPKQQPQTKPEKKTVSRKVVVQLTKFEK) are cytoplasmic. A helical transmembrane segment spans residues 46-65 (VLYITLITVIAMLSIYMLSL). Residues 66–133 (KMDAYDTRGK…VVRSNGEAKN (68 aa)) lie on the Extracellular side of the membrane.

This sequence belongs to the FtsL family.

It localises to the cell membrane. Functionally, essential cell division protein. The protein is Cell division protein FtsL of Staphylococcus aureus (strain NCTC 8325 / PS 47).